The following is a 225-amino-acid chain: Glutathione S-transferase zeta class (225 aa).

Residues 10-91 (PKLKLYSYFR…YLEEKYPEHP (82 aa)) form the GST N-terminal domain. Glutathione-binding positions include 20–25 (SSCSFR), Gln-49, Val-63, 75–76 (DS), Gln-115, and 119–121 (NLA). The region spanning 96–221 (DIHKKAINYQ…MPDKQPDSTS (126 aa)) is the GST C-terminal domain.

The protein belongs to the GST superfamily. Zeta family.

The protein localises to the cytoplasm. The enzyme catalyses RX + glutathione = an S-substituted glutathione + a halide anion + H(+). The polypeptide is Glutathione S-transferase zeta class (Euphorbia esula (Leafy spurge)).